A 337-amino-acid chain; its full sequence is Mediator of RNA polymerase II transcription subunit 19 (337 aa).

Disordered stretches follow at residues 1–38, 155–234, and 297–337; these read MMSN…KTTI, YVTP…LPGG, and QMSS…MSQF. The span at 28–38 shows a compositional bias: polar residues; that stretch reads QDSSGTLKTTI. Composition is skewed to basic residues over residues 159–171 and 208–221; these read ARKH…KQKH and RKKR…KKKN. Residues 189–223 adopt a coiled-coil conformation; it reads LETYEKKHKKQKRHEDDKERKKRKKEKKRKKKNQS. Low complexity predominate over residues 297 to 309; it reads QMSSGGLLGSVLG. A compositionally biased stretch (gly residues) spans 310–330; it reads TSGGPGGGGGGGGGGGGGVGG.

Belongs to the Mediator complex subunit 19 family. Component of the Mediator complex.

The protein localises to the nucleus. Component of the Mediator complex, a coactivator involved in the regulated transcription of nearly all RNA polymerase II-dependent genes. Mediator functions as a bridge to convey information from gene-specific regulatory proteins to the basal RNA polymerase II transcription machinery. Mediator is recruited to promoters by direct interactions with regulatory proteins and serves as a scaffold for the assembly of a functional preinitiation complex with RNA polymerase II and the general transcription factors. The polypeptide is Mediator of RNA polymerase II transcription subunit 19 (MED19) (Drosophila melanogaster (Fruit fly)).